A 127-amino-acid polypeptide reads, in one-letter code: DNA-directed RNA polymerase subunit omega (127 aa).

It belongs to the RNA polymerase subunit omega family. The RNAP catalytic core consists of 2 alpha, 1 beta, 1 beta' and 1 omega subunit. When a sigma factor is associated with the core the holoenzyme is formed, which can initiate transcription.

The enzyme catalyses RNA(n) + a ribonucleoside 5'-triphosphate = RNA(n+1) + diphosphate. Functionally, promotes RNA polymerase assembly. Latches the N- and C-terminal regions of the beta' subunit thereby facilitating its interaction with the beta and alpha subunits. This is DNA-directed RNA polymerase subunit omega from Rickettsia typhi (strain ATCC VR-144 / Wilmington).